A 556-amino-acid chain; its full sequence is 2-succinyl-5-enolpyruvyl-6-hydroxy-3-cyclohexene-1-carboxylate synthase (556 aa).

This sequence belongs to the TPP enzyme family. MenD subfamily. In terms of assembly, homodimer. It depends on Mg(2+) as a cofactor. Mn(2+) serves as cofactor. Requires thiamine diphosphate as cofactor.

The catalysed reaction is isochorismate + 2-oxoglutarate + H(+) = 5-enolpyruvoyl-6-hydroxy-2-succinyl-cyclohex-3-ene-1-carboxylate + CO2. It participates in quinol/quinone metabolism; 1,4-dihydroxy-2-naphthoate biosynthesis; 1,4-dihydroxy-2-naphthoate from chorismate: step 2/7. The protein operates within quinol/quinone metabolism; menaquinone biosynthesis. Functionally, catalyzes the thiamine diphosphate-dependent decarboxylation of 2-oxoglutarate and the subsequent addition of the resulting succinic semialdehyde-thiamine pyrophosphate anion to isochorismate to yield 2-succinyl-5-enolpyruvyl-6-hydroxy-3-cyclohexene-1-carboxylate (SEPHCHC). This Escherichia coli O7:K1 (strain IAI39 / ExPEC) protein is 2-succinyl-5-enolpyruvyl-6-hydroxy-3-cyclohexene-1-carboxylate synthase.